The primary structure comprises 470 residues: MSTNEGSLWGGRFADGPADALAALSKSTHFDWVLAPYDVVASKAHARVLFRAGLLTEEQRDGLLAGLDSLGSDVADGSFGPLVSDEDVHGALERGLIDRVGADLGGRLRAGRSRNDQVATLFRLWLRDAIRRVADGVLEVVAALATQAAAHPTAIMPGKTHLQSAQPVLLAHHLLAHAHPLLRDVDRLADFDKRAAVSPYGSGALAGSSLGLDPDAIAEELGFAAAADNSIDATASRDFAAEAAFVFSMIGVDLSRLAEDIILWSTTEFGYVTLHDAWSTGSSIMPQKKNPDIAELARGKSGRLIGNLAGLLATLKAQPLAYNRDLQEDKEPVFDSVAQLELLLPAMAGLVGTLRFDVDRMAELAPLGYTLATDVAEWLVRRGVPFRVAHEAAGAAVRAAEARGIGLEDLADAELTGIHPQLTADVREVLTTEGSVNSRDARGGTAPTQVARQLSAVRDTSERFRVRLRR.

This sequence belongs to the lyase 1 family. Argininosuccinate lyase subfamily.

It localises to the cytoplasm. It carries out the reaction 2-(N(omega)-L-arginino)succinate = fumarate + L-arginine. The protein operates within amino-acid biosynthesis; L-arginine biosynthesis; L-arginine from L-ornithine and carbamoyl phosphate: step 3/3. This chain is Argininosuccinate lyase, found in Mycolicibacterium vanbaalenii (strain DSM 7251 / JCM 13017 / BCRC 16820 / KCTC 9966 / NRRL B-24157 / PYR-1) (Mycobacterium vanbaalenii).